The sequence spans 144 residues: IgW chain C region, secreted form 1/3 (144 aa).

In terms of domain architecture, Ig-like spans 1–82; sequence VYNQTTAVLG…AGSRFNDRIS (82 aa). Residues Asn-3, Asn-43, and Asn-123 are each glycosylated (N-linked (GlcNAc...) asparagine). A disulfide bridge connects residues Cys-11 and Cys-68. The interval 87–144 is secretory tail; the sequence is KGGTINLPVPGGNTPCTCPPCSCSGCMPKLVYQTDLNVTLENGGQLQYNCHQQACKIK.

In terms of tissue distribution, expressed mainly in lymphoid tissues including spleen, epigonal organ and circulating lymphocytes.

It localises to the secreted. The sequence is that of IgW chain C region, secreted form 1/3 from Heterodontus francisci (Horn shark).